Here is a 351-residue protein sequence, read N- to C-terminus: Nicotinate-nucleotide--dimethylbenzimidazole phosphoribosyltransferase (351 aa).

Glu-317 acts as the Proton acceptor in catalysis.

The protein belongs to the CobT family.

It carries out the reaction 5,6-dimethylbenzimidazole + nicotinate beta-D-ribonucleotide = alpha-ribazole 5'-phosphate + nicotinate + H(+). It participates in nucleoside biosynthesis; alpha-ribazole biosynthesis; alpha-ribazole from 5,6-dimethylbenzimidazole: step 1/2. Its function is as follows. Catalyzes the synthesis of alpha-ribazole-5'-phosphate from nicotinate mononucleotide (NAMN) and 5,6-dimethylbenzimidazole (DMB). The polypeptide is Nicotinate-nucleotide--dimethylbenzimidazole phosphoribosyltransferase (Pseudomonas putida (strain GB-1)).